Here is a 106-residue protein sequence, read N- to C-terminus: UPF0642 protein YBL028C (106 aa).

Residues 1–12 (MAKSLRASSHLN) are compositionally biased toward polar residues. Disordered stretches follow at residues 1–21 (MAKSLRASSHLNAKSVKRRGV) and 52–106 (KEEQ…FTRF). The span at 62-72 (DEKKSNEEAPR) shows a compositional bias: basic and acidic residues. The span at 83–106 (GRHHTYKKAKLMKQSKKKTSFTRF) shows a compositional bias: basic residues.

Belongs to the UPF0642 family.

In Saccharomyces cerevisiae (strain ATCC 204508 / S288c) (Baker's yeast), this protein is UPF0642 protein YBL028C.